The chain runs to 466 residues: Uridine kinase-like protein 3 (466 aa).

The segment at 41-246 is uridine kinase; sequence HGQPFVIGVA…IVQHIHTKLG (206 aa). The segment at 256 to 466 is uracil phosphoribosyltransferase; sequence NLYVIQSTFQ…GDRYFGTDDE (211 aa). GTP contacts are provided by residues Lys280, Arg289, and 323-326; that span reads CKKL. 2 residues coordinate 5-phospho-alpha-D-ribose 1-diphosphate: Arg333 and Arg358. Residue Arg378 coordinates GTP. 5-phospho-alpha-D-ribose 1-diphosphate contacts are provided by residues Asp384, 389–392, and Glu455; that span reads TGNS. 454–456 is a binding site for uracil; the sequence is GEF.

The protein in the N-terminal section; belongs to the uridine kinase family. It in the C-terminal section; belongs to the UPRTase family. The cofactor is Mg(2+).

The enzyme catalyses UMP + diphosphate = 5-phospho-alpha-D-ribose 1-diphosphate + uracil. It catalyses the reaction cytidine + ATP = CMP + ADP + H(+). It carries out the reaction uridine + ATP = UMP + ADP + H(+). It participates in pyrimidine metabolism; UMP biosynthesis via salvage pathway; UMP from uracil: step 1/1. Its pathway is pyrimidine metabolism; CTP biosynthesis via salvage pathway; CTP from cytidine: step 1/3. The protein operates within pyrimidine metabolism; UMP biosynthesis via salvage pathway; UMP from uridine: step 1/1. Its activity is regulated as follows. Allosterically activated by GTP. Involved in the pyrimidine salvage pathway. The uracil phosphoribosyltransferase (UPRT) activity, that catalyzes the conversion of uracil and 5-phospho-alpha-D-ribose 1-diphosphate (PRPP) to UMP and diphosphate, is unsure. The sequence is that of Uridine kinase-like protein 3 (UKL3) from Arabidopsis thaliana (Mouse-ear cress).